We begin with the raw amino-acid sequence, 95 residues long: Immunogenic miracidial antigen 8C (95 aa).

Over residues 1-15 the composition is skewed to polar residues; that stretch reads EFTISFSSPVISTGQ. Residues 1–95 are disordered; sequence EFTISFSSPV…PKKYGSGHKY (95 aa). Residues 20–41 show a composition bias toward acidic residues; sequence GDEDYHDGDDDVDYTDDVDDVD. Positions 45 to 59 are enriched in polar residues; sequence GSPSQLLQGGYQRNQ.

This sequence belongs to the immunogenic miracidial antigen family.

This chain is Immunogenic miracidial antigen 8C (8C), found in Schistosoma japonicum (Blood fluke).